We begin with the raw amino-acid sequence, 89 residues long: Meiosis expressed gene 1 protein homolog (89 aa).

Belongs to the MEIG1 family.

This chain is Meiosis expressed gene 1 protein homolog, found in Nematostella vectensis (Starlet sea anemone).